The sequence spans 354 residues: DNA polymerase IV (354 aa).

The region spanning 6 to 187 (IIHIDCDCFY…LPVARLHGVG (182 aa)) is the UmuC domain. The Mg(2+) site is built by aspartate 10 and aspartate 105. Glutamate 106 is a catalytic residue.

Belongs to the DNA polymerase type-Y family. As to quaternary structure, monomer. Requires Mg(2+) as cofactor.

The protein localises to the cytoplasm. The enzyme catalyses DNA(n) + a 2'-deoxyribonucleoside 5'-triphosphate = DNA(n+1) + diphosphate. Functionally, poorly processive, error-prone DNA polymerase involved in untargeted mutagenesis. Copies undamaged DNA at stalled replication forks, which arise in vivo from mismatched or misaligned primer ends. These misaligned primers can be extended by PolIV. Exhibits no 3'-5' exonuclease (proofreading) activity. May be involved in translesional synthesis, in conjunction with the beta clamp from PolIII. In Pseudomonas entomophila (strain L48), this protein is DNA polymerase IV.